A 491-amino-acid chain; its full sequence is Glutamate--tRNA ligase (491 aa).

A 'HIGH' region motif is present at residues 13–23; that stretch reads PSPTGFLHIGN. Residues C110, C112, C137, and H139 each coordinate Zn(2+). The 'KMSKS' region signature appears at 254 to 258; sequence KLSKR. K257 is a binding site for ATP.

The protein belongs to the class-I aminoacyl-tRNA synthetase family. Glutamate--tRNA ligase type 1 subfamily. Monomer. Zn(2+) is required as a cofactor.

The protein resides in the cytoplasm. It catalyses the reaction tRNA(Glu) + L-glutamate + ATP = L-glutamyl-tRNA(Glu) + AMP + diphosphate. Functionally, catalyzes the attachment of glutamate to tRNA(Glu) in a two-step reaction: glutamate is first activated by ATP to form Glu-AMP and then transferred to the acceptor end of tRNA(Glu). This is Glutamate--tRNA ligase from Listeria monocytogenes serovar 1/2a (strain ATCC BAA-679 / EGD-e).